The following is a 551-amino-acid chain: Pyrroline-5-carboxylate reductase 1 (551 aa).

The disordered stretch occupies residues 279 to 551 (LYTQKQQNKK…RHEVKTEQIN (273 aa)). 7 stretches are compositionally biased toward low complexity: residues 282 to 298 (QKQQNKKQQQLKQQQHQ), 306 to 342 (QQHQQQVQQQEPHQYQQQQQQSHQQSQYNQGHNYGHQ), 383 to 415 (QQYQQHQQPTQQESQEQTQQPEQTQSTNQSNQR), 424 to 441 (KSPQKQPQKQSQVQQPSS), 448 to 475 (QQQQQQPPQEQQQQQEQPQQPQEQQQQP), 487 to 496 (QQQQPQQQQQ), and 503 to 520 (YNNNRRGGRHYSYNNNYN). The segment covering 537–551 (YHDEKRHEVKTEQIN) has biased composition (basic and acidic residues).

It belongs to the pyrroline-5-carboxylate reductase family. Homodecamer; composed of 5 homodimers.

The catalysed reaction is L-proline + NADP(+) = (S)-1-pyrroline-5-carboxylate + NADPH + 2 H(+). The enzyme catalyses L-proline + NAD(+) = (S)-1-pyrroline-5-carboxylate + NADH + 2 H(+). It participates in amino-acid biosynthesis; L-proline biosynthesis; L-proline from L-glutamate 5-semialdehyde: step 1/1. The protein is Pyrroline-5-carboxylate reductase 1 (pycr1) of Dictyostelium discoideum (Social amoeba).